The sequence spans 391 residues: Putative glutamate--cysteine ligase 2-2 (391 aa).

It belongs to the glutamate--cysteine ligase type 2 family. YbdK subfamily.

The catalysed reaction is L-cysteine + L-glutamate + ATP = gamma-L-glutamyl-L-cysteine + ADP + phosphate + H(+). Functionally, ATP-dependent carboxylate-amine ligase which exhibits weak glutamate--cysteine ligase activity. In Saccharopolyspora erythraea (strain ATCC 11635 / DSM 40517 / JCM 4748 / NBRC 13426 / NCIMB 8594 / NRRL 2338), this protein is Putative glutamate--cysteine ligase 2-2.